Here is a 291-residue protein sequence, read N- to C-terminus: Kidney mitochondrial carrier protein 1 (291 aa).

S2 carries the post-translational modification N-acetylserine. Solcar repeat units follow at residues 7 to 96 (KPFV…LKRL), 104 to 189 (ETLL…TKKH), and 198 to 289 (DTVA…LKKL). The next 6 helical transmembrane spans lie at 9 to 26 (FVYG…TFPI), 71 to 89 (GIAP…KIGT), 106 to 124 (LLVN…SAIA), 164 to 183 (GVSL…LPVY), 204 to 224 (FLSS…VDVV), and 264 to 283 (GFWP…FLTY).

This sequence belongs to the mitochondrial carrier (TC 2.A.29) family. Interacts with VDAC1. In terms of tissue distribution, present in kidney (at protein level). Expressed predominantly within the kidney cortex in the proximal and distal tubules and at lower levels in the testis and white adipose tissue.

Its subcellular location is the mitochondrion inner membrane. It carries out the reaction sulfite(in) + sulfate(out) = sulfite(out) + sulfate(in). The enzyme catalyses thiosulfate(in) + sulfate(out) = thiosulfate(out) + sulfate(in). It catalyses the reaction sulfate(out) + phosphate(in) = sulfate(in) + phosphate(out). The catalysed reaction is oxalate(in) + sulfate(out) = oxalate(out) + sulfate(in). It carries out the reaction malonate(in) + sulfate(out) = malonate(out) + sulfate(in). The enzyme catalyses maleate(in) + sulfate(out) = maleate(out) + sulfate(in). It catalyses the reaction (S)-malate(in) + sulfate(out) = (S)-malate(out) + sulfate(in). The catalysed reaction is (3S)-citramalate(in) + sulfate(out) = (3S)-citramalate(out) + sulfate(in). It carries out the reaction (3R)-citramalate(in) + sulfate(out) = (3R)-citramalate(out) + sulfate(in). The enzyme catalyses sulfate(out) + succinate(in) = sulfate(in) + succinate(out). It catalyses the reaction (S,S)-tartrate(in) + sulfate(out) = (S,S)-tartrate(out) + sulfate(in). The catalysed reaction is (2R,3R)-tartrate(in) + sulfate(out) = (2R,3R)-tartrate(out) + sulfate(in). It carries out the reaction D-aspartate(in) + sulfate(out) = D-aspartate(out) + sulfate(in). The enzyme catalyses L-aspartate(in) + sulfate(out) = L-aspartate(out) + sulfate(in). It catalyses the reaction sulfate(in) = sulfate(out). The catalysed reaction is phosphate(in) = phosphate(out). It carries out the reaction (S)-malate(out) = (S)-malate(in). Antiporter that transports inorganic anions (sulfate, sulfite, thiosulfate and phosphate) and, to a lesser extent, a variety of dicarboxylates (e.g. malonate, malate and citramalate) and, even more so, aspartate. The sulfate/sulfate exchange is much higher than the phosphate/phosphate and malate/malate exchanges. The transport affinities is higher for sulfate and thiosulfate than for any other substrate. May catalyze the export of sulfite and thiosulfate (the hydrogen sulfide degradation products) from the mitochondria, thereby modulating the level of the hydrogen sulfide. Also may mediate a very low unidirectional transport of sulfate, phosphate and (S)-malate. The chain is Kidney mitochondrial carrier protein 1 from Mus musculus (Mouse).